The sequence spans 136 residues: Putative pre-16S rRNA nuclease (136 aa).

The protein belongs to the YqgF nuclease family.

Its subcellular location is the cytoplasm. In terms of biological role, could be a nuclease involved in processing of the 5'-end of pre-16S rRNA. In Francisella tularensis subsp. mediasiatica (strain FSC147), this protein is Putative pre-16S rRNA nuclease.